A 395-amino-acid chain; its full sequence is Phosphoglycerate kinase (395 aa).

Substrate is bound by residues 20–22 (DFN), arginine 36, 59–62 (HLGR), arginine 120, and arginine 157. ATP contacts are provided by residues lysine 208, glycine 296, glutamate 327, and 353-356 (GGDT).

The protein belongs to the phosphoglycerate kinase family. As to quaternary structure, monomer.

The protein localises to the cytoplasm. It catalyses the reaction (2R)-3-phosphoglycerate + ATP = (2R)-3-phospho-glyceroyl phosphate + ADP. It functions in the pathway carbohydrate degradation; glycolysis; pyruvate from D-glyceraldehyde 3-phosphate: step 2/5. This is Phosphoglycerate kinase from Tropheryma whipplei (strain TW08/27) (Whipple's bacillus).